We begin with the raw amino-acid sequence, 75 residues long: Acylphosphatase-like protein MJ1405 (75 aa).

The Acylphosphatase-like domain maps to 8–75 (TYEIIIYGRI…TNFWRVRKCK (68 aa)).

This chain is Acylphosphatase-like protein MJ1405, found in Methanocaldococcus jannaschii (strain ATCC 43067 / DSM 2661 / JAL-1 / JCM 10045 / NBRC 100440) (Methanococcus jannaschii).